The sequence spans 189 residues: MKRLWVTGYRSYELSIFSDKDPKLTVIKYALTNYFKSLLEEGKIDWIISGANLGIEQWALEAAIQLQNEYSVHTALMTPYLEFSKRWNENNQMKYQNLTEQVDFTASTSNYPYMSPAQLKNYQSFMLEHTDRAVLIYDPEHPGKPKYDYEAIQKYQEGHEYPVDIIDFYDLQESAEEYEENHRQENNFY.

The protein belongs to the UPF0398 family.

The polypeptide is UPF0398 protein LGAS_1023 (Lactobacillus gasseri (strain ATCC 33323 / DSM 20243 / BCRC 14619 / CIP 102991 / JCM 1131 / KCTC 3163 / NCIMB 11718 / NCTC 13722 / AM63)).